The following is a 365-amino-acid chain: 2-aminoethylphosphonate--pyruvate transaminase (365 aa).

An N6-(pyridoxal phosphate)lysine modification is found at Lys-194.

It belongs to the class-V pyridoxal-phosphate-dependent aminotransferase family. PhnW subfamily. In terms of assembly, homodimer. Requires pyridoxal 5'-phosphate as cofactor.

The catalysed reaction is (2-aminoethyl)phosphonate + pyruvate = phosphonoacetaldehyde + L-alanine. Its function is as follows. Involved in phosphonate degradation. The sequence is that of 2-aminoethylphosphonate--pyruvate transaminase from Bacillus cereus (strain ATCC 10987 / NRS 248).